Here is a 36-residue protein sequence, read N- to C-terminus: Photosystem I reaction center subunit VIII (36 aa).

The chain crosses the membrane as a helical span at residues 9–29 (ILVPLVGLVFPAIAMASLFLY).

It belongs to the PsaI family.

The protein resides in the plastid. Its subcellular location is the chloroplast thylakoid membrane. Its function is as follows. May help in the organization of the PsaL subunit. This Oltmannsiellopsis viridis (Marine flagellate) protein is Photosystem I reaction center subunit VIII.